Here is a 566-residue protein sequence, read N- to C-terminus: Mitochondrial distribution and morphology protein 34 (566 aa).

An SMP-LTD domain is found at 1–195; the sequence is MAFNFNWSPL…LPAIIHRLSL (195 aa). 4 disordered regions span residues 212–237, 349–401, 432–518, and 539–566; these read PEQTAGEGPGQDPLASPPQDPVDSLG, GYGL…NPSV, PERR…SSST, and KLMPTSSCGGAFWGRPDHEEYPPPAYGQ. The span at 358 to 370 shows a compositional bias: basic residues; the sequence is RHSKAHSRKRKKR. A compositionally biased stretch (polar residues) spans 380–401; that stretch reads TSDTASVSDESAYTETASNPSV. The span at 444-454 shows a compositional bias: basic and acidic residues; that stretch reads PRRDIATEMLR.

It belongs to the MDM34 family. As to quaternary structure, component of the ER-mitochondria encounter structure (ERMES) or MDM complex, composed of mmm1, mdm10, mdm12 and mdm34.

Its subcellular location is the mitochondrion outer membrane. Component of the ERMES/MDM complex, which serves as a molecular tether to connect the endoplasmic reticulum (ER) and mitochondria. Components of this complex are involved in the control of mitochondrial shape and protein biogenesis, and function in nonvesicular lipid trafficking between the ER and mitochondria. Mdm34 is required for the interaction of the ER-resident membrane protein mmm1 and the outer mitochondrial membrane-resident beta-barrel protein mdm10. This chain is Mitochondrial distribution and morphology protein 34, found in Aspergillus flavus (strain ATCC 200026 / FGSC A1120 / IAM 13836 / NRRL 3357 / JCM 12722 / SRRC 167).